The primary structure comprises 221 residues: Protein N-terminal glutamine amidohydrolase (221 aa).

An N-acetylserine modification is found at serine 2. Active-site residues include cysteine 23, histidine 79, and aspartate 97.

It belongs to the NTAQ1 family. As to quaternary structure, monomer.

The catalysed reaction is N-terminal L-glutaminyl-[protein] + H2O = N-terminal L-glutamyl-[protein] + NH4(+). Functionally, mediates the side-chain deamidation of N-terminal glutamine residues to glutamate, an important step in N-end rule pathway of protein degradation. Conversion of the resulting N-terminal glutamine to glutamate renders the protein susceptible to arginylation, polyubiquitination and degradation as specified by the N-end rule. Does not act on substrates with internal or C-terminal glutamine and does not act on non-glutamine residues in any position. Involved in immune response. Controls the expression of specific defense-response genes, activates the synthesis pathway for the phytoalexin camalexin, and influences basal resistance to the hemibiotroph pathogen Pseudomonas syringae pv tomato (Pst). This chain is Protein N-terminal glutamine amidohydrolase, found in Arabidopsis thaliana (Mouse-ear cress).